An 886-amino-acid polypeptide reads, in one-letter code: Valine--tRNA ligase (886 aa).

A 'HIGH' region motif is present at residues 53–63 (PNVTGSLHMGH). The 'KMSKS' region motif lies at 540–544 (KMSKS). ATP is bound at residue Lys543. Residues 819-851 (TIDVAAERRRLEKELAGAQKELASTAAKLANAD) adopt a coiled-coil conformation.

This sequence belongs to the class-I aminoacyl-tRNA synthetase family. ValS type 1 subfamily. As to quaternary structure, monomer.

The protein resides in the cytoplasm. The catalysed reaction is tRNA(Val) + L-valine + ATP = L-valyl-tRNA(Val) + AMP + diphosphate. In terms of biological role, catalyzes the attachment of valine to tRNA(Val). As ValRS can inadvertently accommodate and process structurally similar amino acids such as threonine, to avoid such errors, it has a 'posttransfer' editing activity that hydrolyzes mischarged Thr-tRNA(Val) in a tRNA-dependent manner. The sequence is that of Valine--tRNA ligase from Mycobacterium tuberculosis (strain CDC 1551 / Oshkosh).